Here is an 841-residue protein sequence, read N- to C-terminus: Homeobox-leucine zipper protein ATHB-9 (841 aa).

Positions 1–18 are enriched in basic and acidic residues; it reads MMAHHSMDDRDSPDKGFD. The segment at 1–21 is disordered; sequence MMAHHSMDDRDSPDKGFDSGK. Residues 18-81 constitute a DNA-binding region (homeobox); that stretch reads DSGKYVRYTP…NRRCREKQRK (64 aa). Residues 85–118 are a coiled coil; that stretch reads RLQTVNRKLSAMNKLLMEENDRLQKQVSNLVYEN. Disordered stretches follow at residues 140 to 162 and 602 to 630; these read VVVSGQQRQQQNPTHQHPQRDVN and DQKTNPNDHQSASRTRDLASSLDGSTKTD. Over residues 145–155 the composition is skewed to low complexity; that stretch reads QQRQQQNPTHQ. The START domain maps to 160 to 388; it reads DVNNPANLLS…IAQETSGEVQ (229 aa). Over residues 603–614 the composition is skewed to polar residues; the sequence is QKTNPNDHQSAS.

Belongs to the HD-ZIP homeobox family. Class III subfamily. Binds DNA as homodimer. Interacts with ESR1 and ESR2. Interacts with ZPR3.

Its subcellular location is the nucleus. Functionally, probable transcription factor involved in the determination of adaxial-abaxial polarity in ovule primordium. Specifies adaxial leaf fates. Binds to the DNA sequence 5'-GTAAT[GC]ATTAC-3'. The protein is Homeobox-leucine zipper protein ATHB-9 (ATHB-9) of Arabidopsis thaliana (Mouse-ear cress).